The sequence spans 118 residues: MALSPRESAVRRAQRTRTRLKALSNGRPRLSVFRSSKNIYAQVIDDERGVTLASASTLEGEAATKGADKDAAALVGKLVAERAIEKGVKDVVFDRGGYIFHGRVKALADAAREAGLNF.

The protein belongs to the universal ribosomal protein uL18 family. Part of the 50S ribosomal subunit; part of the 5S rRNA/L5/L18/L25 subcomplex. Contacts the 5S and 23S rRNAs.

This is one of the proteins that bind and probably mediate the attachment of the 5S RNA into the large ribosomal subunit, where it forms part of the central protuberance. The protein is Large ribosomal subunit protein uL18 of Caulobacter sp. (strain K31).